We begin with the raw amino-acid sequence, 527 residues long: Type 2 DNA topoisomerase 6 subunit B (527 aa).

Residues N39, D73, 94-95, 103-110, and K421 each bind ATP; these read SK and GVFGLGLK.

Belongs to the TOP6B family. Homodimer. Heterotetramer of two Top6A and two Top6B chains.

It carries out the reaction ATP-dependent breakage, passage and rejoining of double-stranded DNA.. Functionally, relaxes both positive and negative superturns and exhibits a strong decatenase activity. The polypeptide is Type 2 DNA topoisomerase 6 subunit B (Pyrobaculum aerophilum (strain ATCC 51768 / DSM 7523 / JCM 9630 / CIP 104966 / NBRC 100827 / IM2)).